A 228-amino-acid chain; its full sequence is 5'-methylthioadenosine/S-adenosylhomocysteine nucleosidase (228 aa).

Glu11 acts as the Proton acceptor in catalysis. Substrate contacts are provided by residues Gly77, Ile151, and 172 to 173; that span reads ME. The active-site Proton donor is Asp196.

Belongs to the PNP/UDP phosphorylase family. MtnN subfamily.

It carries out the reaction S-adenosyl-L-homocysteine + H2O = S-(5-deoxy-D-ribos-5-yl)-L-homocysteine + adenine. It catalyses the reaction S-methyl-5'-thioadenosine + H2O = 5-(methylsulfanyl)-D-ribose + adenine. The catalysed reaction is 5'-deoxyadenosine + H2O = 5-deoxy-D-ribose + adenine. The protein operates within amino-acid biosynthesis; L-methionine biosynthesis via salvage pathway; S-methyl-5-thio-alpha-D-ribose 1-phosphate from S-methyl-5'-thioadenosine (hydrolase route): step 1/2. Functionally, catalyzes the irreversible cleavage of the glycosidic bond in both 5'-methylthioadenosine (MTA) and S-adenosylhomocysteine (SAH/AdoHcy) to adenine and the corresponding thioribose, 5'-methylthioribose and S-ribosylhomocysteine, respectively. Also cleaves 5'-deoxyadenosine, a toxic by-product of radical S-adenosylmethionine (SAM) enzymes, into 5-deoxyribose and adenine. The chain is 5'-methylthioadenosine/S-adenosylhomocysteine nucleosidase from Staphylococcus aureus (strain JH1).